Here is a 669-residue protein sequence, read N- to C-terminus: NAD-dependent malic enzyme, mitochondrial (669 aa).

The segment covering 33–43 has biased composition (polar residues); that stretch reads IQQSRLYSSNT. The segment at 33 to 68 is disordered; sequence IQQSRLYSSNTRSHKATTTRENTFQKPYSDEEVTKT. Arg-142 is a fumarate binding site. Tyr-187 functions as the Proton donor in the catalytic mechanism. Residue Lys-259 is the Proton acceptor of the active site. Positions 330, 331, and 354 each coordinate a divalent metal cation. The NAD(+) site is built by Ala-387 and Ala-390. (S)-malate contacts are provided by Asn-499 and Asn-539.

This sequence belongs to the malic enzymes family. It depends on Mg(2+) as a cofactor. Mn(2+) is required as a cofactor.

It localises to the mitochondrion matrix. It carries out the reaction (S)-malate + NAD(+) = pyruvate + CO2 + NADH. The enzyme catalyses oxaloacetate + H(+) = pyruvate + CO2. NAD-dependent mitochondrial malic enzyme that catalyzes the oxidative decarboxylation of malate to pyruvate. The polypeptide is NAD-dependent malic enzyme, mitochondrial (MAE1) (Saccharomyces cerevisiae (strain ATCC 204508 / S288c) (Baker's yeast)).